The sequence spans 120 residues: Large ribosomal subunit protein bL19 (120 aa).

This sequence belongs to the bacterial ribosomal protein bL19 family.

Functionally, this protein is located at the 30S-50S ribosomal subunit interface and may play a role in the structure and function of the aminoacyl-tRNA binding site. The polypeptide is Large ribosomal subunit protein bL19 (Thermosynechococcus vestitus (strain NIES-2133 / IAM M-273 / BP-1)).